The primary structure comprises 892 residues: Formin-like protein 8 (892 aa).

Residues 1-23 form the signal peptide; the sequence is MPPAIARFVAIAAVLLCGHVAVA. The tract at residues 43–119 is disordered; that stretch reads FPIEWTPPPS…SGSGSGHHGG (77 aa). A compositionally biased stretch (pro residues) spans 47 to 59; that stretch reads WTPPPSPPPPPAP. A compositionally biased stretch (low complexity) spans 87-111; the sequence is TTPTSPGTTPSPTTVAADVSKTPSG. The helical transmembrane segment at 126 to 146 threads the bilayer; it reads IVAAGAGAAAAVALLGFACAF. The interval 188–457 is disordered; the sequence is PTTPARHHGP…GSGEPRPKLK (270 aa). Residues 210–230 show a composition bias toward basic and acidic residues; that stretch reads LRSERARRGVSRDEDADHPSP. 3 stretches are compositionally biased toward low complexity: residues 268–286, 297–306, and 321–330; these read AEAWSSASASSPPTTTTAS, FFPPVAAIAA, and RTRFSTGSTP. The span at 339 to 383 shows a compositional bias: pro residues; that stretch reads SPRPVQPSNAPPPPPPPPPPPPPPPPPKLNTAPKPPPPPPPPPSV. Positions 424 to 436 are enriched in polar residues; that stretch reads AATTVDNNGSTSM. An FH2 domain is found at 446–867; that stretch reads DGGSGEPRPK…GSARSFRISA (422 aa).

It belongs to the formin-like family. Class-I subfamily.

The protein resides in the membrane. This chain is Formin-like protein 8 (FH8), found in Oryza sativa subsp. japonica (Rice).